We begin with the raw amino-acid sequence, 356 residues long: S-adenosylmethionine:tRNA ribosyltransferase-isomerase (356 aa).

The protein belongs to the QueA family. Monomer.

It is found in the cytoplasm. It catalyses the reaction 7-aminomethyl-7-carbaguanosine(34) in tRNA + S-adenosyl-L-methionine = epoxyqueuosine(34) in tRNA + adenine + L-methionine + 2 H(+). The protein operates within tRNA modification; tRNA-queuosine biosynthesis. Its function is as follows. Transfers and isomerizes the ribose moiety from AdoMet to the 7-aminomethyl group of 7-deazaguanine (preQ1-tRNA) to give epoxyqueuosine (oQ-tRNA). The protein is S-adenosylmethionine:tRNA ribosyltransferase-isomerase of Ralstonia nicotianae (strain ATCC BAA-1114 / GMI1000) (Ralstonia solanacearum).